The following is a 400-amino-acid chain: Subtilisin-like protease 11 (400 aa).

Positions methionine 1–alanine 19 are cleaved as a signal peptide. Positions alanine 20–serine 117 are excised as a propeptide. In terms of domain architecture, Inhibitor I9 spans serine 35–isoleucine 116. In terms of domain architecture, Peptidase S8 spans serine 127 to lysine 400. Residue asparagine 138 is glycosylated (N-linked (GlcNAc...) asparagine). The active-site Charge relay system is aspartate 159. Asparagine 181 is a glycosylation site (N-linked (GlcNAc...) asparagine). The active-site Charge relay system is histidine 191. N-linked (GlcNAc...) asparagine glycans are attached at residues asparagine 252 and asparagine 337. The active-site Charge relay system is serine 346. N-linked (GlcNAc...) asparagine glycans are attached at residues asparagine 388 and asparagine 396.

It belongs to the peptidase S8 family.

It localises to the secreted. Secreted subtilisin-like serine protease with keratinolytic activity that contributes to pathogenicity. This is Subtilisin-like protease 11 (SUB11) from Arthroderma benhamiae (strain ATCC MYA-4681 / CBS 112371) (Trichophyton mentagrophytes).